Reading from the N-terminus, the 379-residue chain is Homoserine O-succinyltransferase (379 aa).

One can recognise an AB hydrolase-1 domain in the interval 51 to 360; that stretch reads NAVLICHALS…DAPQGHDAFL (310 aa). Catalysis depends on Ser-157, which acts as the Nucleophile. Substrate is bound at residue Arg-227. Catalysis depends on residues Asp-323 and His-356. Asp-357 is a binding site for substrate.

Belongs to the AB hydrolase superfamily. MetX family. As to quaternary structure, homodimer.

It localises to the cytoplasm. The catalysed reaction is L-homoserine + succinyl-CoA = O-succinyl-L-homoserine + CoA. It functions in the pathway amino-acid biosynthesis; L-methionine biosynthesis via de novo pathway; O-succinyl-L-homoserine from L-homoserine: step 1/1. Its function is as follows. Transfers a succinyl group from succinyl-CoA to L-homoserine, forming succinyl-L-homoserine. This chain is Homoserine O-succinyltransferase, found in Pseudomonas aeruginosa (strain LESB58).